The following is an 835-amino-acid chain: Adhesion G protein-coupled receptor E5 (835 aa).

Positions 1 to 20 are cleaved as a signal peptide; sequence MGGRVFLAFCVWLTLPGAET. Over 21–552 the chain is Extracellular; that stretch reads QDSRGCARWC…EDWKLTLITR (532 aa). The 42-residue stretch at 22-63 folds into the EGF-like 1 domain; the sequence is DSRGCARWCPQNSSCVNATACRCNPGFSSFSEIITTPTETCD. Cystine bridges form between Cys26-Cys36, Cys30-Cys42, Cys44-Cys62, Cys68-Cys82, Cys76-Cys91, Cys93-Cys114, Cys120-Cys133, Cys127-Cys142, Cys144-Cys158, Cys164-Cys177, Cys171-Cys186, Cys188-Cys207, Cys213-Cys226, Cys220-Cys235, and Cys237-Cys256. Residues Asn33 and Asn38 are each glycosylated (N-linked (GlcNAc...) asparagine). Residues 64–115 form the EGF-like 2; calcium-binding domain; sequence DINECATPSKVSCGKFSDCWNTEGSYDCVCSPGYEPVSGAKTFKNESENTCQ. N-linked (GlcNAc...) asparagine glycosylation is present at Asn108. Residues 116 to 159 form the EGF-like 3; calcium-binding domain; that stretch reads DVDECQQNPRLCKSYGTCVNTLGSYTCQCLPGFKFIPEDPKVCT. The EGF-like 4; calcium-binding domain maps to 160 to 208; sequence DVNECTSGQNPCHSSTHCLNNVGSYQCRCRPGWQPIPGSPNGPNNTVCE. Asn203 is a glycosylation site (N-linked (GlcNAc...) asparagine). The region spanning 209–257 is the EGF-like 5; calcium-binding domain; it reads DVDECSSGQHQCDSSTVCFNTVGSYSCRCRPGWKPRHGIPNNQKDTVCE. The GAIN-B domain maps to 349–543; sequence PFTYISPSNT…AILMAHYDVE (195 aa). N-linked (GlcNAc...) asparagine glycans are attached at residues Asn371, Asn406, Asn413, Asn453, and Asn520. Cystine bridges form between Cys495–Cys525 and Cys513–Cys527. The tract at residues 495–543 is GPS; the sequence is CAFWKSDSDRGGHWATEGCQVLGSKNGSTTCQCSHLSSFAILMAHYDVE. Residues 553–572 form a helical membrane-spanning segment; that stretch reads VGLALSLFCLLLCILTFLLV. At 573–581 the chain is on the cytoplasmic side; that stretch reads RPIQGSRTT. Residues 582–601 traverse the membrane as a helical segment; that stretch reads IHLHLCICLFVGSTIFLAGI. Over 602–620 the chain is Extracellular; that stretch reads ENEGGQVGLRCRLVAGLLH. A helical transmembrane segment spans residues 621–642; the sequence is YCFLAAFCWMSLEGLELYFLVV. The Cytoplasmic segment spans residues 643 to 653; sequence RVFQGQGLSTR. The chain crosses the membrane as a helical span at residues 654-674; it reads WLCLIGYGVPLLIVGVSAAIY. Residues 675–691 are Extracellular-facing; the sequence is SKGYGRPRYCWLDFEQG. A helical transmembrane segment spans residues 692-712; sequence FLWSFLGPVTFIILCNAVIFV. Topologically, residues 713–739 are cytoplasmic; sequence TTVWKLTQKFSEINPDMKKLKKARALT. Residues 740–760 traverse the membrane as a helical segment; that stretch reads ITAIAQLFLLGCTWVFGLFIF. At 761–766 the chain is on the extracellular side; sequence DDRSLV. A helical transmembrane segment spans residues 767-789; the sequence is LTYVFTILNCLQGAFLYLLHCLL. The Cytoplasmic portion of the chain corresponds to 790 to 835; the sequence is NKKVREEYRKWACLVAGGSKYSEFTSTTSGTGHNQTRALRASESGI. The span at 814-826 shows a compositional bias: polar residues; that stretch reads TSTTSGTGHNQTR. Residues 814 to 835 form a disordered region; that stretch reads TSTTSGTGHNQTRALRASESGI. Position 815 is a phosphoserine (Ser815). Thr816 carries the phosphothreonine modification. Ser818 bears the Phosphoserine mark. A Phosphothreonine modification is found at Thr825. Phosphoserine occurs at positions 831 and 833.

This sequence belongs to the G-protein coupled receptor 2 family. LN-TM7 subfamily. Forms a heterodimer, consisting of a large extracellular region (alpha subunit) non-covalently linked to a seven-transmembrane moiety (beta subunit). Interacts with complement decay-accelerating factor (DAF). The largest isoform (isoform 1) interacts with chondroitin sulfate. Proteolytically cleaved into 2 subunits, an extracellular alpha subunit and a seven-transmembrane subunit. In terms of tissue distribution, broadly expressed, found on most hematopoietic cells, including activated lymphocytes, monocytes, macrophages, dendritic cells, and granulocytes. Expressed also abundantly by smooth muscle cells. Expressed in thyroid, colorectal, gastric, esophageal and pancreatic carcinomas too. Expression are increased under inflammatory conditions in the CNS of multiple sclerosis and in synovial tissue of patients with rheumatoid arthritis. Increased expression of CD97 in the synovium is accompanied by detectable levels of soluble CD97 in the synovial fluid.

The protein resides in the cell membrane. It is found in the secreted. The protein localises to the extracellular space. Its function is as follows. Receptor potentially involved in both adhesion and signaling processes early after leukocyte activation. Plays an essential role in leukocyte migration. The chain is Adhesion G protein-coupled receptor E5 from Homo sapiens (Human).